A 164-amino-acid polypeptide reads, in one-letter code: Endoribonuclease YbeY (164 aa).

Residues His-125, His-129, and His-135 each coordinate Zn(2+).

It belongs to the endoribonuclease YbeY family. It depends on Zn(2+) as a cofactor.

Its subcellular location is the cytoplasm. Its function is as follows. Single strand-specific metallo-endoribonuclease involved in late-stage 70S ribosome quality control and in maturation of the 3' terminus of the 16S rRNA. The polypeptide is Endoribonuclease YbeY (Paramagnetospirillum magneticum (strain ATCC 700264 / AMB-1) (Magnetospirillum magneticum)).